Here is a 62-residue protein sequence, read N- to C-terminus: Beta-defensin 33 (62 aa).

The signal sequence occupies residues 1 to 20 (MRLLFLLFLLLVCLAQKTSG). 3 disulfides stabilise this stretch: cysteine 30–cysteine 59, cysteine 37–cysteine 52, and cysteine 45–cysteine 60.

The protein belongs to the beta-defensin family.

The protein localises to the secreted. Has antibacterial activity. The polypeptide is Beta-defensin 33 (Defb33) (Rattus norvegicus (Rat)).